Consider the following 191-residue polypeptide: Prostaglandin-H2 D-isomerase (191 aa).

A signal peptide spans 1-24 (MGALCTLWLGLVLLGVLGALQTSA). Gln-25 is subject to Pyrrolidone carboxylic acid. The N-linked (GlcNAc...) asparagine glycan is linked to Asn-51. The active-site Nucleophile is Cys-65. Asn-78 carries an N-linked (GlcNAc...) asparagine glycan. Cysteines 89 and 186 form a disulfide.

Belongs to the calycin superfamily. Lipocalin family. In terms of assembly, monomer. N- and O-glycosylated. Both N-glycosylation recognition sites are almost quantitatively occupied by N-glycans of the biantennary complex type, with a considerable proportion of structures bearing a bisecting GlcNAc. N-glycan at Asn-78: dHex1Hex5HexNAc4. Agalacto structure as well as sialylated and nonsialylated oligosaccharides bearing alpha2-3- and/or alpha2-6-linked NeuNAc are present.

It localises to the rough endoplasmic reticulum. Its subcellular location is the nucleus membrane. It is found in the golgi apparatus. The protein localises to the cytoplasm. The protein resides in the perinuclear region. It localises to the secreted. The enzyme catalyses prostaglandin H2 = prostaglandin D2. Its function is as follows. Catalyzes the conversion of PGH2 to PGD2, a prostaglandin involved in smooth muscle contraction/relaxation and a potent inhibitor of platelet aggregation. Involved in a variety of CNS functions, such as sedation, NREM sleep and PGE2-induced allodynia, and may have an anti-apoptotic role in oligodendrocytes. Binds small non-substrate lipophilic molecules, including biliverdin, bilirubin, retinal, retinoic acid and thyroid hormone, and may act as a scavenger for harmful hydrophobic molecules and as a secretory retinoid and thyroid hormone transporter. Possibly involved in development and maintenance of the blood-brain, blood-retina, blood-aqueous humor and blood-testis barrier. It is likely to play important roles in both maturation and maintenance of the central nervous system and male reproductive system. Involved in PLA2G3-dependent maturation of mast cells. PLA2G3 is secreted by immature mast cells and acts on nearby fibroblasts upstream to PTDGS to synthesize PGD2, which in turn promotes mast cell maturation and degranulation via PTGDR. This Canis lupus familiaris (Dog) protein is Prostaglandin-H2 D-isomerase (PTGDS).